A 2098-amino-acid chain; its full sequence is 1-phosphatidylinositol 3-phosphate 5-kinase (2098 aa).

The segment at 1–45 is disordered; the sequence is MATDDKTSPTLDSANDLPRSPTSPSHLTHFKPLTPDQDEPPFKSA. At alanine 2 the chain carries N-acetylalanine. A phosphoserine; by autocatalysis mark is found at serine 23 and serine 48. The tract at residues 57-123 is disordered; that stretch reads KERAEGGQGE…EPTFGGHDPR (67 aa). A compositionally biased stretch (polar residues) spans 66–88; it reads EQQPLSGSWTSPQLPSRTQSVRS. Serine 88 carries the phosphoserine modification. Residues 158 to 218 form an FYVE-type zinc finger; it reads DSQCKECYDC…ACTYCRKIAL (61 aa). Residues cysteine 164, cysteine 167, cysteine 180, cysteine 183, cysteine 188, cysteine 191, cysteine 210, and cysteine 213 each contribute to the Zn(2+) site. The tract at residues 292–329 is disordered; that stretch reads VQEDAGKSPARNRSASITNLSLDRSGSPMVPSYETSVS. Phosphoserine occurs at positions 299, 307, and 312. A compositionally biased stretch (polar residues) spans 302–315; the sequence is RNRSASITNLSLDR. The residue at position 318 (serine 318) is a Phosphoserine; by PKB/AKT1 or PKB/AKT2. Residue serine 329 is modified to Phosphoserine. The DEP domain maps to 365–440; that stretch reads HSSGMEFQDH…DEYALYRPLQ (76 aa). The span at 442 to 459 shows a compositional bias: polar residues; the sequence is TEFSETPSPDSDSVNSVE. The segment at 442–469 is disordered; sequence TEFSETPSPDSDSVNSVEGHSEPSWFKD. The segment covering 460–469 has biased composition (basic and acidic residues); sequence GHSEPSWFKD. Serine 475 bears the Phosphoserine mark. Positions 484 to 505 are disordered; it reads GDDNLANSASPSKRTSVSSFQS. The segment covering 488–505 has biased composition (polar residues); the sequence is LANSASPSKRTSVSSFQS. Residues 616 to 868 are chaperonin-like domain; that stretch reads MMALLQQLLH…MICVAYHSQL (253 aa). 2 disordered regions span residues 1161-1191 and 1512-1616; these read RIQP…NEGD and FQQE…STDS. Over residues 1177–1186 the composition is skewed to low complexity; it reads SSTSSGQSGS. Serine 1522 carries the post-translational modification Phosphoserine; by autocatalysis. A phosphoserine mark is found at serine 1544 and serine 1549. Residues 1562 to 1578 show a composition bias toward low complexity; the sequence is LTTLSSQSSTSSTHLQL. Serine 1669 is modified (phosphoserine; by autocatalysis). The disordered stretch occupies residues 1692–1799; that stretch reads QWNSAEEGLP…PQDEVDGGDT (108 aa). The span at 1704 to 1714 shows a compositional bias: low complexity; it reads STSDSRPKSSS. Polar residues predominate over residues 1723–1735; sequence GGQTNRTTETEPQ. Serine 1754 is subject to Phosphoserine. In terms of domain architecture, PIPK spans 1758-2084; sequence SSQKRETLRG…RFCEAMDKYF (327 aa). The catalytic stretch occupies residues 1842-2098; it reads EEDFIRSLSH…DHWTGLGLNC (257 aa). Phosphoserine; by autocatalysis is present on residues serine 1969 and serine 2053.

As to quaternary structure, component of the PI(3,5)P2 regulatory complex/PAS complex, at least composed of PIKFYVE, FIG4 and VAC14. VAC14 nucleates the assembly of the complex and serves as a scaffold by pentamerizing into a star-shaped structure, which can bind a single copy each of PIKFYVE and FIG4 and coordinates their activities. Interacts (via chaperonin-like domain) with RABEPK; the interaction recruits RABEPK to the endosomal membrane. Interacts with SPAG9. Interacts with EGFR. In terms of processing, autophosphorylates which inhibits its own phosphatidylinositol 3-phosphate 5-kinase activity, stimulates FIG4 lipid phosphatase activity and down-regulates lipid product formation. Dephosphorylated by FIG4 in the PI(3,5)P2 regulatory complex, at Ser-48, Ser-1669 and Ser-2053. Phosphorylated in response to insulin at Ser-318 in a protein kinase B (PKB)-dependent manner.

It is found in the endosome membrane. Its subcellular location is the early endosome membrane. It localises to the cytoplasmic vesicle. The protein resides in the phagosome membrane. The protein localises to the late endosome membrane. It catalyses the reaction a 1,2-diacyl-sn-glycero-3-phospho-(1D-myo-inositol-3-phosphate) + ATP = a 1,2-diacyl-sn-glycero-3-phospho-(1D-myo-inositol-3,5-bisphosphate) + ADP + H(+). The enzyme catalyses a 1,2-diacyl-sn-glycero-3-phospho-(1D-myo-inositol) + ATP = a 1,2-diacyl-sn-glycero-3-phospho-(1D-myo-inositol-5-phosphate) + ADP + H(+). It carries out the reaction L-seryl-[protein] + ATP = O-phospho-L-seryl-[protein] + ADP + H(+). Its activity is regulated as follows. Inhibited by apilimod and YM201636. Its function is as follows. Dual specificity kinase implicated in myriad essential cellular processes such as maintenance of endomembrane homeostasis, and endocytic-vacuolar pathway, lysosomal trafficking, nuclear transport, stress- or hormone-induced signaling and cell cycle progression. The PI(3,5)P2 regulatory complex regulates both the synthesis and turnover of phosphatidylinositol 3,5-bisphosphate (PtdIns(3,5)P2). Sole enzyme to catalyze the phosphorylation of phosphatidylinositol 3-phosphate on the fifth hydroxyl of the myo-inositol ring, to form (PtdIns(3,5)P2). Also catalyzes the phosphorylation of phosphatidylinositol on the fifth hydroxyl of the myo-inositol ring, to form phosphatidylinositol 5-phosphate (PtdIns(5)P). Has serine-protein kinase activity and is able to autophosphorylate and transphosphorylate. Autophosphorylation inhibits its own phosphatidylinositol 3-phosphate 5-kinase activity, stimulates FIG4 lipid phosphatase activity and down-regulates lipid product formation. Involved in key endosome operations such as fission and fusion in the course of endosomal cargo transport. Required for the maturation of early into late endosomes, phagosomes and lysosomes. Regulates vacuole maturation and nutrient recovery following engulfment of macromolecules, initiates the redistribution of accumulated lysosomal contents back into the endosome network. Critical regulator of the morphology, degradative activity, and protein turnover of the endolysosomal system in macrophages and platelets. In neutrophils, critical to perform chemotaxis, generate ROS, and undertake phagosome fusion with lysosomes. Plays a key role in the processing and presentation of antigens by major histocompatibility complex class II (MHC class II) mediated by CTSS. Regulates melanosome biogenesis by controlling the delivery of proteins from the endosomal compartment to the melanosome. Essential for systemic glucose homeostasis, mediates insulin-induced signals for endosome/actin remodeling in the course of GLUT4 translocation/glucose uptake activation. Supports microtubule-based endosome-to-trans-Golgi network cargo transport, through association with SPAG9 and RABEPK. Mediates EGFR trafficking to the nucleus. (Microbial infection) Required for cell entry of coronaviruses SARS-CoV and SARS-CoV-2, as well as human coronavirus EMC (HCoV-EMC) by endocytosis. The chain is 1-phosphatidylinositol 3-phosphate 5-kinase from Homo sapiens (Human).